The chain runs to 401 residues: Type 3 secretion system translocon protein SctE (401 aa).

A coiled-coil region spans residues 129–160; that stretch reads IQRLHEQNMKKIEENQEKIKETEENAKQVKKS. The next 2 membrane-spanning stretches (helical) occupy residues 176 to 196 and 224 to 244; these read VIVGAIMVASGVGAVAGAMMV and ILGPILTAIEVALTVVSTVMT. The stretch at 345 to 379 forms a coiled coil; the sequence is LALNKADMAALQSIIDRLKEELSHLSESHQQVMEL.

It belongs to the SctE/SipB/YopB family. In terms of assembly, the core secretion machinery of the T3SS is composed of approximately 20 different proteins, including cytoplasmic components, a base, an export apparatus and a needle. This subunit is involved in the formation of a pore, called the translocon, in host membrane. Interacts with YopD/SctB. Together with YopD/SctB, forms a multimeric integral membrane complex.

Its subcellular location is the secreted. It localises to the host membrane. In terms of biological role, component of the type III secretion system (T3SS), also called injectisome, which is used to inject bacterial effector proteins into eukaryotic host cells. YopB/SctE and YopD/SctB are inserted into the host membrane where they form a pore and allow the translocation of effector proteins into the cytosol of target cells. Is an essential virulence determinant. Required for YopE and YopH translocation. Shows membrane disruptive activity in vitro. Interaction with the host cell triggers a signaling response, via activation of the small GTPase Ras, the MAPK kinases ERK and JNK and the nuclear factor NF-kappa-B pathways, and production of the proinflammatory cytokine interleukin-8 (IL-8). YopB/SctE-dependent signaling response is counteracted by YopE, YopH and YopJ in infected host cells. YopB/SctE is directly responsible for signaling and its insertion in the membrane is important to activate the signaling response in the host cell. The chain is Type 3 secretion system translocon protein SctE from Yersinia pseudotuberculosis serotype I (strain IP32953).